The following is a 253-amino-acid chain: Major prion protein (253 aa).

Residues 1–22 form the signal peptide; sequence MANLGCWMLVLFVATWSDLGLC. An interaction with ADGRG6 region spans residues 23–38; that stretch reads KKRPKPGGWNTGGSRY. An interaction with GRB2, ERI3 and SYN1 region spans residues 23-230; sequence KKRPKPGGWN…ESQAYYQRGS (208 aa). Residues 26 to 108 are disordered; it reads PKPGGWNTGG…WNKPSKPKTN (83 aa). A run of 5 repeats spans residues 51–59, 60–67, 68–75, 76–83, and 84–91. The 5 X 8 AA tandem repeats of P-H-G-G-G-W-G-Q stretch occupies residues 51-91; sequence PQGGGGWGQPHGGGWGQPHGGGWGQPHGGGWGQPHGGGWGQ. Residues 52–95 show a composition bias toward gly residues; the sequence is QGGGGWGQPHGGGWGQPHGGGWGQPHGGGWGQPHGGGWGQGGGT. The Cu(2+) site is built by His-61, Gly-62, Gly-63, His-69, Gly-70, Gly-71, His-77, Gly-78, Gly-79, His-85, Gly-86, and Gly-87. Cys-179 and Cys-214 are joined by a disulfide. N-linked (GlcNAc...) asparagine glycans are attached at residues Asn-181 and Asn-197. The GPI-anchor amidated serine moiety is linked to residue Ser-230. The propeptide at 231-253 is removed in mature form; sequence SMVLFSSPPVILLISFLIFLIVG.

Belongs to the prion family. In terms of assembly, monomer and homodimer. Has a tendency to aggregate into amyloid fibrils containing a cross-beta spine, formed by a steric zipper of superposed beta-strands. Soluble oligomers may represent an intermediate stage on the path to fibril formation. Copper binding may promote oligomerization. Interacts with GRB2, APP, ERI3/PRNPIP and SYN1. Mislocalized cytosolically exposed PrP interacts with MGRN1; this interaction alters MGRN1 subcellular location and causes lysosomal enlargement. Interacts with KIAA1191. Interacts with ADGRG6. In terms of processing, the glycosylation pattern (the amount of mono-, di- and non-glycosylated forms or glycoforms) seems to differ in normal and CJD prion.

The protein resides in the cell membrane. It is found in the golgi apparatus. Its primary physiological function is unclear. May play a role in neuronal development and synaptic plasticity. May be required for neuronal myelin sheath maintenance. May promote myelin homeostasis through acting as an agonist for ADGRG6 receptor. May play a role in iron uptake and iron homeostasis. Soluble oligomers are toxic to cultured neuroblastoma cells and induce apoptosis (in vitro). Association with GPC1 (via its heparan sulfate chains) targets PRNP to lipid rafts. Also provides Cu(2+) or Zn(2+) for the ascorbate-mediated GPC1 deaminase degradation of its heparan sulfate side chains. The polypeptide is Major prion protein (PRNP) (Homo sapiens (Human)).